Consider the following 345-residue polypeptide: Protein-glutamate methylesterase/protein-glutamine glutaminase 2 (345 aa).

One can recognise a Response regulatory domain in the interval 7-124 (KVLVVDDSPV…TADMLGYRSL (118 aa)). Asp58 is modified (4-aspartylphosphate). One can recognise a CheB-type methylesterase domain in the interval 154–345 (STSQYQLIAI…LPQFLCDLLS (192 aa)). Catalysis depends on residues Ser166, His192, and Asp289.

This sequence belongs to the CheB family. Phosphorylated by CheA. Phosphorylation of the N-terminal regulatory domain activates the methylesterase activity.

The protein localises to the cytoplasm. The enzyme catalyses [protein]-L-glutamate 5-O-methyl ester + H2O = L-glutamyl-[protein] + methanol + H(+). It carries out the reaction L-glutaminyl-[protein] + H2O = L-glutamyl-[protein] + NH4(+). Its function is as follows. Involved in chemotaxis. Part of a chemotaxis signal transduction system that modulates chemotaxis in response to various stimuli. Catalyzes the demethylation of specific methylglutamate residues introduced into the chemoreceptors (methyl-accepting chemotaxis proteins or MCP) by CheR. Also mediates the irreversible deamidation of specific glutamine residues to glutamic acid. The polypeptide is Protein-glutamate methylesterase/protein-glutamine glutaminase 2 (Vibrio vulnificus (strain YJ016)).